A 42-amino-acid polypeptide reads, in one-letter code: MSGSVCCACDTRFFRAQWVDCGFGGSSSVVVGASPQGLLRVR.

This is an uncharacterized protein from Treponema pallidum (strain Nichols).